We begin with the raw amino-acid sequence, 638 residues long: Chaperone protein HtpG (638 aa).

The tract at residues 1–346 is a; substrate-binding; the sequence is MSQQETHGFQ…SNDLPLNVSR (346 aa). The segment at 347–563 is b; that stretch reads EILQDNKVTT…EGEMSTQMIK (217 aa). Residues 564–638 form a c region; the sequence is LMQAAGQDVP…MNQMLLASVK (75 aa).

The protein belongs to the heat shock protein 90 family. As to quaternary structure, homodimer.

The protein resides in the cytoplasm. Functionally, molecular chaperone. Has ATPase activity. In Shewanella pealeana (strain ATCC 700345 / ANG-SQ1), this protein is Chaperone protein HtpG.